The chain runs to 126 residues: Probable V-type proton ATPase subunit G (126 aa).

Residues 23-45 (NEARKRKLQRTKQAKQEAQAEVE) are disordered. The segment covering 26–35 (RKRKLQRTKQ) has biased composition (basic residues).

Belongs to the V-ATPase G subunit family. As to quaternary structure, V-ATPase is a heteromultimeric enzyme made up of two complexes: the ATP-hydrolytic V1 complex and the proton translocation V0 complex. The V1 complex consists of three catalytic AB heterodimers that form a heterohexamer, three peripheral stalks each consisting of EG heterodimers, one central rotor including subunits D and F, and the regulatory subunits C and H. The proton translocation complex V0 consists of the proton transport subunit a, a ring of proteolipid subunits c9c'', rotary subunit d, subunits e and f, and the accessory subunits vah-19/Ac45 and vah-20/PRR.

Its function is as follows. Subunit of the V1 complex of vacuolar(H+)-ATPase (V-ATPase), a multisubunit enzyme composed of a peripheral complex (V1) that hydrolyzes ATP and a membrane integral complex (V0) that translocates protons. V-ATPase is responsible for acidifying and maintaining the pH of intracellular compartments and in some cell types, is targeted to the plasma membrane, where it is responsible for acidifying the extracellular environment. In neurons, required for necrotic cell death by promoting intracellular acidification. The protein is Probable V-type proton ATPase subunit G of Caenorhabditis briggsae.